The following is a 593-amino-acid chain: Efflux pump FUB11 (593 aa).

The tract at residues 1–45 (MAIDPQPSSPSLSSETIANDTIGNDNNVNEPSVEPKTQEHQHTVP) is disordered. The segment covering 9 to 30 (SPSLSSETIANDTIGNDNNVNE) has biased composition (polar residues). N-linked (GlcNAc...) asparagine glycosylation occurs at N19. Helical transmembrane passes span 98–118 (WAFV…SSAY), 135–155 (VATL…LVWA), 167–187 (FFFT…AGSI), 195–215 (FLTG…IADM), 227–247 (MFSG…GFLG), 254–274 (WLHG…TVFI), 337–357 (IYIS…PIVF), 367–387 (IGGL…ISFA), 410–430 (LPPA…FAWT), 438–458 (IVPI…FMAL), 468–488 (IFAA…GAAF), and 503–523 (WASS…FLFY). Residues 570–593 (THNSHASAAHSHGHRRSLSYTRSA) are disordered.

The protein belongs to the major facilitator superfamily. DHA1 family. Polyamines/proton antiporter (TC 2.A.1.2.16) subfamily.

It localises to the cell membrane. Its function is as follows. Efflux pump involved in export of fusaric acid, a mycotoxin with low to moderate toxicity to animals and humans, but with high phytotoxic properties. Constitutes a self-protecting mechanism of the fungus against critical levels of FSA within the cell. The chain is Efflux pump FUB11 from Gibberella moniliformis (strain M3125 / FGSC 7600) (Maize ear and stalk rot fungus).